The chain runs to 523 residues: 26S proteasome regulatory subunit RPN3 (523 aa).

N-acetylalanine is present on Ala-2. The PCI domain occupies 270 to 450 (ARYFFYLSKI…GFIETTELLN (181 aa)). Ser-454 is modified (phosphoserine). Positions 480-495 (RYPEDKKTQQNEKSEN) are enriched in basic and acidic residues. Residues 480–523 (RYPEDKKTQQNEKSENGENDDDTLDGDLMDDMSDISDLDDLGFL) are disordered. A compositionally biased stretch (acidic residues) spans 496–523 (GENDDDTLDGDLMDDMSDISDLDDLGFL).

This sequence belongs to the proteasome subunit S3 family. The 26S proteasome is composed of a core protease, known as the 20S proteasome, capped at one or both ends by the 19S regulatory complex (RC). The RC is composed of at least 18 different subunits in two subcomplexes, the base and the lid, which form the portions proximal and distal to the 20S proteolytic core, respectively. N-acetylated by NAT1.

Acts as a regulatory subunit of the 26S proteasome which is involved in the ATP-dependent degradation of ubiquitinated proteins. The sequence is that of 26S proteasome regulatory subunit RPN3 (RPN3) from Saccharomyces cerevisiae (strain ATCC 204508 / S288c) (Baker's yeast).